A 119-amino-acid polypeptide reads, in one-letter code: Defensin-like protein 260 (119 aa).

The N-terminal stretch at 1–24 (MKIASLKLLLLVSLLFAVTQNGIS) is a signal peptide. 4 cysteine pairs are disulfide-bonded: C44–C99, C63–C79, C69–C83, and C73–C85.

This sequence belongs to the DEFL family.

It localises to the secreted. This Arabidopsis thaliana (Mouse-ear cress) protein is Defensin-like protein 260.